A 379-amino-acid chain; its full sequence is Probable pectin lyase A (379 aa).

A signal peptide spans 1–19 (MKFALLSGVAAGLLPVVSA). Cystine bridges form between cysteine 82–cysteine 101 and cysteine 91–cysteine 225. Residue arginine 255 is part of the active site. Residues cysteine 322 and cysteine 330 are joined by a disulfide bond.

Belongs to the polysaccharide lyase 1 family.

The protein localises to the secreted. The enzyme catalyses Eliminative cleavage of (1-&gt;4)-alpha-D-galacturonan methyl ester to give oligosaccharides with 4-deoxy-6-O-methyl-alpha-D-galact-4-enuronosyl groups at their non-reducing ends.. Pectinolytic enzymes consist of four classes of enzymes: pectin lyase, polygalacturonase, pectin methylesterase and rhamnogalacturonase. Among pectinolytic enzymes, pectin lyase is the most important in depolymerization of pectin, since it cleaves internal glycosidic bonds of highly methylated pectins. The sequence is that of Probable pectin lyase A (pelA) from Aspergillus oryzae (strain ATCC 42149 / RIB 40) (Yellow koji mold).